Here is a 313-residue protein sequence, read N- to C-terminus: Pantoate--beta-alanine ligase (313 aa).

Position 36 to 43 (36 to 43 (MGYLHQGH)) interacts with ATP. H43 acts as the Proton donor in catalysis. Q71 provides a ligand contact to (R)-pantoate. Q71 serves as a coordination point for beta-alanine. 178 to 181 (GKKD) contributes to the ATP binding site. Position 184 (Q184) interacts with (R)-pantoate. 215-218 (MSSR) serves as a coordination point for ATP.

Belongs to the pantothenate synthetase family. In terms of assembly, homodimer.

The protein localises to the cytoplasm. It is found in the cytosol. It carries out the reaction (R)-pantoate + beta-alanine + ATP = (R)-pantothenate + AMP + diphosphate + H(+). Its pathway is cofactor biosynthesis; (R)-pantothenate biosynthesis; (R)-pantothenate from (R)-pantoate and beta-alanine: step 1/1. In terms of biological role, catalyzes the condensation of pantoate with beta-alanine to form pantothenate. Essential for panthotenate biosynthesis. The polypeptide is Pantoate--beta-alanine ligase (PANC) (Oryza sativa subsp. japonica (Rice)).